The primary structure comprises 275 residues: Ribosomal protein L11 methyltransferase (275 aa).

S-adenosyl-L-methionine-binding residues include T123, G146, D167, and N208.

The protein belongs to the methyltransferase superfamily. PrmA family.

The protein localises to the cytoplasm. The catalysed reaction is L-lysyl-[protein] + 3 S-adenosyl-L-methionine = N(6),N(6),N(6)-trimethyl-L-lysyl-[protein] + 3 S-adenosyl-L-homocysteine + 3 H(+). Its function is as follows. Methylates ribosomal protein L11. This Campylobacter fetus subsp. fetus (strain 82-40) protein is Ribosomal protein L11 methyltransferase.